We begin with the raw amino-acid sequence, 134 residues long: Cytochrome c-type biogenesis protein CcmE (134 aa).

At 1–7 the chain is on the cytoplasmic side; that stretch reads MKRKYRR. The helical; Signal-anchor for type II membrane protein transmembrane segment at 8–28 threads the bilayer; sequence LFVVIITLSIFAGSVVFVLGK. Over 29 to 134 the chain is Periplasmic; that stretch reads LKNNVSFFYT…MPNKYKTNNL (106 aa). Residues His-120 and Tyr-124 each contribute to the heme site.

The protein belongs to the CcmE/CycJ family.

It localises to the cell inner membrane. Heme chaperone required for the biogenesis of c-type cytochromes. Transiently binds heme delivered by CcmC and transfers the heme to apo-cytochromes in a process facilitated by CcmF and CcmH. In Ehrlichia ruminantium (strain Gardel), this protein is Cytochrome c-type biogenesis protein CcmE.